A 301-amino-acid polypeptide reads, in one-letter code: Runt-related transcription factor rnt-1 (301 aa).

One can recognise a Runt domain in the interval N10 to I138. 3 interaction with DNA regions span residues R40–S44, R95–G103, and V128–R137. Chloride-binding residues include R99 and V130. The segment at P237–F301 is disordered. At S255 the chain carries Phosphoserine. Residues S255–S276 show a composition bias toward polar residues. Residues V285–F301 are compositionally biased toward low complexity.

In terms of assembly, interacts with CBFbeta homolog bro-1; acts to increase the affinity and specificity of interaction of rnt-1 with DNA. Interacts with TGF-beta pathway protein sma-4. May be ubiquitinated in order to be targeted for proteasome-mediated degradation in intestinal cells. In terms of processing, may be phosphorylated by members of the p38 MAP kinase pathway. As to expression, expressed in the intestine.

The protein localises to the nucleus. Transcription factor. Binds to regulatory DNA sequences in order to modulate transcription; negatively autoregulates its own expression, perhaps dependent upon CBF beta homolog bro-1. Promotes proliferation, and prevents differentiation, of seam cells, a stem cell-like lineage, acting in concert with bro-1. Required for controlling cell proliferation in the seam cells, perhaps by repressing expression of cyclin-dependent kinase inhibitor cki-1. Inhibition of seam cell differentiation is regulated by rnt-1 and bro-1, perhaps acting upstream of pop-1, by antagonizing pop-1 repressor function. Required for asymmetrical cell divisions in the lineage derived from a posterior embryonic seam cell, the T blast cell, and for asymmetric expression of zinc finger protein tlp-1. Regulates growth and male tail development. Involved in the oxidative stress response, perhaps downstream of the p38 MAP kinase pathway, and acting as part of a negative feedback loop via a transcriptional target gene, tyrosine-protein phosphatase vhp-1. Positively modulates dopaminergic signaling in a non-cell autonomous manner. May be involved in TGF-beta signaling. This Caenorhabditis elegans protein is Runt-related transcription factor rnt-1.